The following is a 26-amino-acid chain: Beta-hexosaminidase (26 aa).

Glycosylated. As to expression, detected in dry seeds and cotyledons.

The enzyme catalyses Hydrolysis of terminal non-reducing N-acetyl-D-hexosamine residues in N-acetyl-beta-D-hexosaminides.. With respect to regulation, inhibited by AgNO(3) at a concentration of 0.1 mM. Strongly inhibited by CdCl(2), ZnCl(2) and FeCl(3) and moderately by CoCl(2), CuSO(4) and NiCl(2) at 10 mM concentration. CaCl(2), MgCl(2), MnSO(4) and KI also have a slight inhibitory effect of 20%-25% at 10 mM concentration. Activated to a small extent by MgCl(2) at 0.1 mM concentration but inhibited with increasing concentration. Not affected by carbohydrates such as fucose, galactose and glucose but displays a slight decrease in activity up to 25% with lactose, alpha-mannose and N-acetyl-galactosamine (GalNAc). In terms of biological role, has hexosaminidase activity. Active with both p-nitrophenyl-beta-D-N-acetylglucosamine (pNP-GlcNAc) and p-nitrophenyl-beta-D-N-acetylgalactosamine (pNP-GalNAc). Not active toward p-nitrophenyl-beta-D-N,N'-diacetylchitobiose (pNP-(GlcNAc)2) or p-nitrophenyl-beta-D-N,N',N''-triacetylchitobiose (pNP-(GlcNAc)3). Removes terminal GlcNAc and may be involved in storage protein degradation. This chain is Beta-hexosaminidase, found in Lupinus albus (White lupine).